A 476-amino-acid chain; its full sequence is Ribulose bisphosphate carboxylase large chain (476 aa).

Positions 124 and 174 each coordinate substrate. Catalysis depends on Lys-176, which acts as the Proton acceptor. Lys-178 serves as a coordination point for substrate. The Mg(2+) site is built by Lys-202, Asp-204, and Glu-205. At Lys-202 the chain carries N6-carboxylysine. Residue His-295 is the Proton acceptor of the active site. The substrate site is built by Arg-296, His-328, and Ser-380.

The protein belongs to the RuBisCO large chain family. Type I subfamily. In terms of assembly, heterohexadecamer of 8 large chains and 8 small chains; disulfide-linked. The disulfide link is formed within the large subunit homodimers. Requires Mg(2+) as cofactor. Post-translationally, the disulfide bond which can form in the large chain dimeric partners within the hexadecamer appears to be associated with oxidative stress and protein turnover.

Its subcellular location is the carboxysome. The catalysed reaction is 2 (2R)-3-phosphoglycerate + 2 H(+) = D-ribulose 1,5-bisphosphate + CO2 + H2O. It carries out the reaction D-ribulose 1,5-bisphosphate + O2 = 2-phosphoglycolate + (2R)-3-phosphoglycerate + 2 H(+). Its function is as follows. RuBisCO catalyzes two reactions: the carboxylation of D-ribulose 1,5-bisphosphate, the primary event in carbon dioxide fixation, as well as the oxidative fragmentation of the pentose substrate in the photorespiration process. Both reactions occur simultaneously and in competition at the same active site. The protein is Ribulose bisphosphate carboxylase large chain of Trichormus variabilis (strain ATCC 29413 / PCC 7937) (Anabaena variabilis).